The following is a 514-amino-acid chain: Putative thymidine phosphorylase (514 aa).

Belongs to the thymidine/pyrimidine-nucleoside phosphorylase family. Type 2 subfamily.

The catalysed reaction is thymidine + phosphate = 2-deoxy-alpha-D-ribose 1-phosphate + thymine. In Sphingopyxis alaskensis (strain DSM 13593 / LMG 18877 / RB2256) (Sphingomonas alaskensis), this protein is Putative thymidine phosphorylase.